Consider the following 1052-residue polypeptide: Membrane-bound transcription factor site-1 protease (1052 aa).

A signal peptide spans 1–17 (MKLVNIWLLLLVVLLCG). A propeptide spanning residues 18 to 186 (KKHLGDRLEK…TGRHSSRRLL (169 aa)) is cleaved from the precursor. Phosphoserine; by FAM20C is present on serine 168. The Lumenal segment spans residues 187–998 (RAIPRQVAQT…IMPGRYNQEV (812 aa)). One can recognise a Peptidase S8 domain in the interval 190-472 (PRQVAQTLQA…HGKLDLLRAY (283 aa)). Aspartate 218 functions as the Charge relay system in the catalytic mechanism. N-linked (GlcNAc...) asparagine glycosylation is present at asparagine 236. Catalysis depends on histidine 249, which acts as the Charge relay system. N-linked (GlcNAc...) asparagine glycosylation is present at asparagine 305. Catalysis depends on serine 414, which acts as the Charge relay system. N-linked (GlcNAc...) asparagine glycosylation is found at asparagine 515 and asparagine 728. Polar residues predominate over residues 877-887 (PSLSHSGNRQR). The disordered stretch occupies residues 877-899 (PSLSHSGNRQRPPSGAGSVTPER). Residue asparagine 939 is glycosylated (N-linked (GlcNAc...) asparagine). Residues 999 to 1021 (GQTIPVFAFLGAMVVLAFFVVQI) traverse the membrane as a helical segment. Over 1022–1052 (NKAKSRPKRRKPRVKRPQLMQQVHPPKTPSV) the chain is Cytoplasmic. Basic residues predominate over residues 1027 to 1037 (RPKRRKPRVKR). The interval 1027–1052 (RPKRRKPRVKRPQLMQQVHPPKTPSV) is disordered.

This sequence belongs to the peptidase S8 family. As to quaternary structure, interacts with LYSET; this interaction bridges GNPTAB to MBTPS1. It depends on Ca(2+) as a cofactor. The 148 kDa zymogen is processed progressively into two membrane-bound 120 and 106 kDa forms in the endoplasmic reticulum, and late into a secreted 98 kDa form. The propeptide is autocatalytically removed through an intramolecular cleavage after Leu-186. Further cleavage generates 14, 10, and 8 kDa intermediates. As to expression, widely expressed.

The protein localises to the endoplasmic reticulum membrane. It is found in the golgi apparatus membrane. The catalysed reaction is Processes precursors containing basic and hydrophobic/aliphatic residues at P4 and P2, respectively, with a relatively relaxed acceptance of amino acids at P1 and P3.. With respect to regulation, inhibited by divalent copper and zinc ions, but not by nickel or cobalt. Inhibited by its prosegment, but not smaller fragments. Inhibited by 4-(2-aminoethyl)benzenesulfonyl fluoride (AEBSF), a serine protease inhibitor. Serine protease that cleaves after hydrophobic or small residues, provided that Arg or Lys is in position P4: known substrates include SREBF1/SREBP1, SREBF2/SREBP2, BDNF, GNPTAB, ATF6, ATF6B and FAM20C. Cleaves substrates after Arg-Ser-Val-Leu (SREBP2), Arg-His-Leu-Leu (ATF6), Arg-Gly-Leu-Thr (BDNF) and its own propeptide after Arg-Arg-Leu-Leu. Catalyzes the first step in the proteolytic activation of the sterol regulatory element-binding proteins (SREBPs) SREBF1/SREBP1 and SREBF2/SREBP2. Also mediates the first step in the proteolytic activation of the cyclic AMP-dependent transcription factor ATF-6 (ATF6 and ATF6B). Mediates the protein cleavage of GNPTAB into subunit alpha and beta, thereby participating in biogenesis of lysosomes. Cleaves the propeptide from FAM20C which is required for FAM20C secretion from the Golgi apparatus membrane and for enhancement of FAM20C kinase activity, promoting osteoblast differentiation and biomineralization. Involved in the regulation of M6P-dependent Golgi-to-lysosome trafficking of lysosomal enzymes. It is required for the activation of CREB3L2/BBF2H7, a transcriptional activator of MIA3/TANGO and other genes controlling mega vesicle formation. Therefore, it plays a key role in the regulation of mega vesicle-mediated collagen trafficking. In astrocytes and osteoblasts, upon DNA damage and ER stress, mediates the first step of the regulated intramembrane proteolytic activation of the transcription factor CREB3L1, leading to the inhibition of cell-cycle progression. The chain is Membrane-bound transcription factor site-1 protease from Homo sapiens (Human).